Reading from the N-terminus, the 627-residue chain is MSVQSNKNLSESAQVDQQSIQPFPRSQKIYVQGSRPDIRVPMREISLDVTPTDFGGEINAPVTVYDTSGPYTDPNVTIDVRKGLADVRSAWIEDRGDTEKLPGLTSEFGQRRLNDAELSAMRFAHVRNPRRAKAEHNVSQMHYAKKGIITPEMEYVAIRENMKLAEAREAGLLVEQHAGQSFGAAIPKEITPEFVRSEVARGRAIIPANINHTELEPMIIGRNFLVKINGNIGNSALGSSIEEEVAKLTWGIRWGSDTVMDLSTGKHIHETREWIIRNSPVPIGTVPIYQALEKVNGVAEDLTWELFRDTLIEQAEQGVDYFTIHAGVLLRYVPLTAKRVTGIVSRGGSIMAKWCLAHHKENFLYTHFEEICEIMKAYDVSFSLGDGLRPGSIADANDAAQFGELETLGELTKIAWKHDVQCMIEGPGHVPMHMIKENMDKQLECCDEAPFYTLGPLTTDIAPGYDHITSGIGAAMIGWFGCAMLCYVTPKEHLGLPNKDDVKTGIITYKIAAHAADLAKGHPGAQIRDNALSKARFEFRWEDQFNLGLDPDTARAFHDETLPKESAKVAHFCSMCGPKFCSMKITQEVREYAAEHGLTDEQKAIEAGFAEQSSRFKDGGSVIYKQV.

The segment at 1-21 is disordered; it reads MSVQSNKNLSESAQVDQQSIQ. Residues asparagine 231, methionine 260, tyrosine 289, histidine 325, 345–347, 386–389, and glutamate 425 contribute to the substrate site; these read SRG and DGLR. Residue histidine 429 participates in Zn(2+) binding. Tyrosine 452 is a substrate binding site. Histidine 493 lines the Zn(2+) pocket. [4Fe-4S] cluster is bound by residues cysteine 573, cysteine 576, and cysteine 581.

The protein belongs to the ThiC family. Homodimer. It depends on [4Fe-4S] cluster as a cofactor.

The enzyme catalyses 5-amino-1-(5-phospho-beta-D-ribosyl)imidazole + S-adenosyl-L-methionine = 4-amino-2-methyl-5-(phosphooxymethyl)pyrimidine + CO + 5'-deoxyadenosine + formate + L-methionine + 3 H(+). It functions in the pathway cofactor biosynthesis; thiamine diphosphate biosynthesis. In terms of biological role, catalyzes the synthesis of the hydroxymethylpyrimidine phosphate (HMP-P) moiety of thiamine from aminoimidazole ribotide (AIR) in a radical S-adenosyl-L-methionine (SAM)-dependent reaction. The protein is Phosphomethylpyrimidine synthase of Stutzerimonas stutzeri (strain A1501) (Pseudomonas stutzeri).